A 935-amino-acid polypeptide reads, in one-letter code: Isoleucine--tRNA ligase (935 aa).

The 'HIGH' region signature appears at proline 58–histidine 68. Residue glutamate 558 coordinates L-isoleucyl-5'-AMP. The short motif at lysine 599–serine 603 is the 'KMSKS' region element. Residue lysine 602 participates in ATP binding. The Zn(2+) site is built by cysteine 897, cysteine 900, cysteine 917, and cysteine 920.

The protein belongs to the class-I aminoacyl-tRNA synthetase family. IleS type 1 subfamily. In terms of assembly, monomer. Requires Zn(2+) as cofactor.

Its subcellular location is the cytoplasm. It carries out the reaction tRNA(Ile) + L-isoleucine + ATP = L-isoleucyl-tRNA(Ile) + AMP + diphosphate. Functionally, catalyzes the attachment of isoleucine to tRNA(Ile). As IleRS can inadvertently accommodate and process structurally similar amino acids such as valine, to avoid such errors it has two additional distinct tRNA(Ile)-dependent editing activities. One activity is designated as 'pretransfer' editing and involves the hydrolysis of activated Val-AMP. The other activity is designated 'posttransfer' editing and involves deacylation of mischarged Val-tRNA(Ile). This is Isoleucine--tRNA ligase from Francisella philomiragia subsp. philomiragia (strain ATCC 25017 / CCUG 19701 / FSC 153 / O#319-036).